Here is a 277-residue protein sequence, read N- to C-terminus: Uridine phosphorylase (277 aa).

It belongs to the PNP/UDP phosphorylase family.

The protein localises to the cytoplasm. It carries out the reaction uridine + phosphate = alpha-D-ribose 1-phosphate + uracil. It functions in the pathway pyrimidine metabolism; UMP biosynthesis via salvage pathway; uracil from uridine (phosphorylase route): step 1/1. Its function is as follows. Catalyzes the reversible phosphorylytic cleavage of uridine to uracil and ribose-1-phosphate. The polypeptide is Uridine phosphorylase (Thermococcus kodakarensis (strain ATCC BAA-918 / JCM 12380 / KOD1) (Pyrococcus kodakaraensis (strain KOD1))).